The sequence spans 248 residues: Probable transcriptional regulatory protein R02753 (248 aa).

Belongs to the TACO1 family.

The protein localises to the cytoplasm. The chain is Probable transcriptional regulatory protein R02753 from Rhizobium meliloti (strain 1021) (Ensifer meliloti).